The sequence spans 426 residues: Enolase (426 aa).

Residue glutamine 165 coordinates (2R)-2-phosphoglycerate. Residue glutamate 209 is the Proton donor of the active site. The Mg(2+) site is built by aspartate 244, glutamate 287, and aspartate 313. (2R)-2-phosphoglycerate contacts are provided by lysine 338, arginine 367, serine 368, and lysine 389. The active-site Proton acceptor is lysine 338.

The protein belongs to the enolase family. The cofactor is Mg(2+).

The protein resides in the cytoplasm. It is found in the secreted. The protein localises to the cell surface. It carries out the reaction (2R)-2-phosphoglycerate = phosphoenolpyruvate + H2O. It functions in the pathway carbohydrate degradation; glycolysis; pyruvate from D-glyceraldehyde 3-phosphate: step 4/5. Functionally, catalyzes the reversible conversion of 2-phosphoglycerate (2-PG) into phosphoenolpyruvate (PEP). It is essential for the degradation of carbohydrates via glycolysis. This chain is Enolase, found in Methanococcus vannielii (strain ATCC 35089 / DSM 1224 / JCM 13029 / OCM 148 / SB).